A 298-amino-acid polypeptide reads, in one-letter code: Mitochondrial dicarboxylate/tricarboxylate transporter DTC (298 aa).

3 Solcar repeats span residues 12 to 93, 103 to 194, and 202 to 292; these read WTTV…LTAK, LPLY…SAEY, and GEMS…ITKF. The next 6 helical transmembrane spans lie at 18–38, 68–88, 109–129, 169–189, 208–228, and 268–288; these read FVNG…IDMI, GLSA…GSFK, ALCG…ADLA, GCGP…ASYD, VGAS…FDFV, and FPVY…FLNQ.

Belongs to the mitochondrial carrier (TC 2.A.29) family. As to expression, highly expressed in flower buds and at lower levels in roots, leaves and stems.

The protein resides in the mitochondrion inner membrane. In terms of biological role, catalyzes the transport of dicarboxylates, such as oxoglutarate, oxaloacetate, malate, and succinate, and of tricarboxylates, such as citrate, isocitrate, cis-aconitate, and trans-aconitate by a counter-exchange mechanism across the inner mitochondrial membrane. Substrate preference in reconstituted proteoliposomes is oxaloacetate &gt; malonate &gt; malate &gt; maleate &gt; succinate &gt; oxoglutarate &gt; citrate &gt; trans-aconitate &gt; cis-aconitate &gt; sulfate &gt; isocitrate. May be important for plant metabolic functions requiring organic acid flux to or from the mitochondria, such as nitrogen assimilation, export of reducing equivalents from the mitochondria, and fatty acid elongation. This is Mitochondrial dicarboxylate/tricarboxylate transporter DTC (DTC) from Arabidopsis thaliana (Mouse-ear cress).